Reading from the N-terminus, the 500-residue chain is Melanopsin-like (500 aa).

Residues 1–65 (MSHHSSWRGH…TVDVPDHAHY (65 aa)) lie on the Extracellular side of the membrane. A glycan (N-linked (GlcNAc...) asparagine) is linked at asparagine 18. Residues 66 to 86 (IIGSVILIVGITGVIGNALVV) traverse the membrane as a helical segment. Residues 87–101 (YVFCRSRTLRTAGNM) are Cytoplasmic-facing. Residues 102–122 (FIVNLAVADFLMSVTQSPVFF) form a helical membrane-spanning segment. Residues 123–138 (AASLHRRWVFGERPCE) lie on the Extracellular side of the membrane. Cysteines 137 and 215 form a disulfide. The helical transmembrane segment at 139-159 (LYAFCGALFGICSMMTLTAIA) threads the bilayer. The Cytoplasmic portion of the chain corresponds to 160–182 (ADRCLAITQPLALVSRVSRRKAG). A helical membrane pass occupies residues 183 to 203 (AVLVVVWLYSLGWSLPPFFGW). Residues 204–232 (SAYVPEGLQTSCSWDYMTFTPSVRAYTIL) lie on the Extracellular side of the membrane. A helical membrane pass occupies residues 233–253 (LFVFVFFIPLGIIGSCYFAIF). The Cytoplasmic portion of the chain corresponds to 254–286 (QTIRAAGKEIRELDCGETHKVYERMQNEWKMAK). A helical transmembrane segment spans residues 287–307 (VALVVIVLFIISWSPYSVVAL). Residues 308 to 322 (TATAGYSHFLTPYMN) lie on the Extracellular side of the membrane. Residues 323-343 (SVPAVIAKASAIHNPIIYAIT) traverse the membrane as a helical segment. At lysine 330 the chain carries N6-(retinylidene)lysine. Over 344 to 500 (HPKYRVAIAR…SDGKALLGGN (157 aa)) the chain is Cytoplasmic. The disordered stretch occupies residues 404-428 (RWGKTRLSSASDSDSCWTESEADGS). Residues 409 to 428 (RLSSASDSDSCWTESEADGS) show a composition bias toward polar residues.

This sequence belongs to the G-protein coupled receptor 1 family. Opsin subfamily. In terms of tissue distribution, expressed in a subset of retinal horizontal cells.

The protein localises to the cell membrane. Functionally, photoreceptor implicated in non-image-forming responses to light. In Danio rerio (Zebrafish), this protein is Melanopsin-like (opn4l).